A 79-amino-acid chain; its full sequence is Acyl carrier protein (79 aa).

The 76-residue stretch at 2-77 (SSIEERVKKI…QAVDYINKHL (76 aa)) folds into the Carrier domain. Position 37 is an O-(pantetheine 4'-phosphoryl)serine (S37).

Belongs to the acyl carrier protein (ACP) family. In terms of processing, 4'-phosphopantetheine is transferred from CoA to a specific serine of apo-ACP by AcpS. This modification is essential for activity because fatty acids are bound in thioester linkage to the sulfhydryl of the prosthetic group.

It localises to the cytoplasm. It functions in the pathway lipid metabolism; fatty acid biosynthesis. Its function is as follows. Carrier of the growing fatty acid chain in fatty acid biosynthesis. The polypeptide is Acyl carrier protein (Alkalilimnicola ehrlichii (strain ATCC BAA-1101 / DSM 17681 / MLHE-1)).